The primary structure comprises 559 residues: Formate--tetrahydrofolate ligase (559 aa).

68–75 (TPAGEGKT) provides a ligand contact to ATP.

This sequence belongs to the formate--tetrahydrofolate ligase family.

The catalysed reaction is (6S)-5,6,7,8-tetrahydrofolate + formate + ATP = (6R)-10-formyltetrahydrofolate + ADP + phosphate. The protein operates within one-carbon metabolism; tetrahydrofolate interconversion. The chain is Formate--tetrahydrofolate ligase from Rhizobium etli (strain CIAT 652).